The following is a 454-amino-acid chain: CCA-adding enzyme (454 aa).

2 residues coordinate ATP: Ser59 and Arg62. The CTP site is built by Ser59 and Arg62. Residues Asp71, Asp73, and Asp125 each contribute to the Mg(2+) site. ATP is bound by residues His148, Lys167, and Tyr176. 3 residues coordinate CTP: His148, Lys167, and Tyr176.

This sequence belongs to the tRNA nucleotidyltransferase/poly(A) polymerase family. Archaeal CCA-adding enzyme subfamily. Homodimer. The cofactor is Mg(2+).

The catalysed reaction is a tRNA precursor + 2 CTP + ATP = a tRNA with a 3' CCA end + 3 diphosphate. It carries out the reaction a tRNA with a 3' CCA end + 2 CTP + ATP = a tRNA with a 3' CCACCA end + 3 diphosphate. Catalyzes the addition and repair of the essential 3'-terminal CCA sequence in tRNAs without using a nucleic acid template. Adds these three nucleotides in the order of C, C, and A to the tRNA nucleotide-73, using CTP and ATP as substrates and producing inorganic pyrophosphate. tRNA 3'-terminal CCA addition is required both for tRNA processing and repair. Also involved in tRNA surveillance by mediating tandem CCA addition to generate a CCACCA at the 3' terminus of unstable tRNAs. While stable tRNAs receive only 3'-terminal CCA, unstable tRNAs are marked with CCACCA and rapidly degraded. The polypeptide is CCA-adding enzyme (Methanosarcina barkeri (strain Fusaro / DSM 804)).